Consider the following 179-residue polypeptide: Shikimate kinase (179 aa).

An ATP-binding site is contributed by 15 to 20 (GAGKTS). Residue threonine 19 participates in Mg(2+) binding. Positions 37, 61, and 83 each coordinate substrate. Arginine 123 is a binding site for ATP. Residue arginine 142 participates in substrate binding.

It belongs to the shikimate kinase family. As to quaternary structure, monomer. Mg(2+) serves as cofactor.

It is found in the cytoplasm. The catalysed reaction is shikimate + ATP = 3-phosphoshikimate + ADP + H(+). Its pathway is metabolic intermediate biosynthesis; chorismate biosynthesis; chorismate from D-erythrose 4-phosphate and phosphoenolpyruvate: step 5/7. Functionally, catalyzes the specific phosphorylation of the 3-hydroxyl group of shikimic acid using ATP as a cosubstrate. The chain is Shikimate kinase from Coxiella burnetii (strain CbuG_Q212) (Coxiella burnetii (strain Q212)).